Here is a 129-residue protein sequence, read N- to C-terminus: Small ribosomal subunit protein uS11 (129 aa).

It belongs to the universal ribosomal protein uS11 family. In terms of assembly, part of the 30S ribosomal subunit. Interacts with proteins S7 and S18. Binds to IF-3.

Located on the platform of the 30S subunit, it bridges several disparate RNA helices of the 16S rRNA. Forms part of the Shine-Dalgarno cleft in the 70S ribosome. The polypeptide is Small ribosomal subunit protein uS11 (Francisella tularensis subsp. holarctica (strain FTNF002-00 / FTA)).